The primary structure comprises 242 residues: Myogenic factor 6 (242 aa).

A disordered region spans residues 30–63; it reads GSPLYPGSDGTLSPCQDQLPPEAGSDSSGEEHVL. The bHLH domain occupies 93–144; sequence DRRKAATLRERRRLKKINEAFEALKRRTVANPNQRLPKVEILRSAISYIERL. The tract at residues 190-210 is disordered; it reads ASDHSRALGGSPKAGGSMVES.

In terms of assembly, efficient DNA binding requires dimerization with another bHLH protein. Skeletal muscle.

Its subcellular location is the nucleus. Involved in muscle differentiation (myogenic factor). Induces fibroblasts to differentiate into myoblasts. Probable sequence specific DNA-binding protein. In Gallus gallus (Chicken), this protein is Myogenic factor 6 (MYF6).